We begin with the raw amino-acid sequence, 493 residues long: NADH-ubiquinone oxidoreductase 51 kDa subunit, mitochondrial (493 aa).

The transit peptide at 1 to 27 (MLSRTAAPTKASARTLSRAAAEQCRTF) directs the protein to the mitochondrion. 96-105 (GRGGAGFPSG) lines the NAD(+) pocket. 212-259 (GAGAYVCGEETSLIESLEGKPGKPRLKPPFPAAVGLFGCPSTVANVET) contacts FMN. The [4Fe-4S] cluster site is built by Cys391, Cys394, Cys397, and Cys437.

The protein belongs to the complex I 51 kDa subunit family. Complex I is composed of about 40 different subunits. This is a component of the flavoprotein-sulfur (FP) fragment of the enzyme. FMN serves as cofactor. [4Fe-4S] cluster is required as a cofactor.

It localises to the mitochondrion inner membrane. It carries out the reaction a ubiquinone + NADH + 5 H(+)(in) = a ubiquinol + NAD(+) + 4 H(+)(out). Its function is as follows. Core subunit of the mitochondrial membrane respiratory chain NADH dehydrogenase (Complex I) that is believed to belong to the minimal assembly required for catalysis. Complex I functions in the transfer of electrons from NADH to the respiratory chain. The immediate electron acceptor for the enzyme is believed to be ubiquinone. This is NADH-ubiquinone oxidoreductase 51 kDa subunit, mitochondrial (nuo-51) from Neurospora crassa (strain ATCC 24698 / 74-OR23-1A / CBS 708.71 / DSM 1257 / FGSC 987).